A 387-amino-acid chain; its full sequence is 3-ketoacyl-CoA thiolase (387 aa).

Cys91 serves as the catalytic Acyl-thioester intermediate. Active-site proton acceptor residues include His343 and Cys373.

Belongs to the thiolase-like superfamily. Thiolase family. As to quaternary structure, heterotetramer of two alpha chains (FadB) and two beta chains (FadA).

The protein localises to the cytoplasm. It carries out the reaction an acyl-CoA + acetyl-CoA = a 3-oxoacyl-CoA + CoA. It functions in the pathway lipid metabolism; fatty acid beta-oxidation. In terms of biological role, catalyzes the final step of fatty acid oxidation in which acetyl-CoA is released and the CoA ester of a fatty acid two carbons shorter is formed. The protein is 3-ketoacyl-CoA thiolase of Enterobacter sp. (strain 638).